We begin with the raw amino-acid sequence, 106 residues long: Glutaredoxin-1 (106 aa).

At Ala2 the chain carries N-acetylalanine. The Glutaredoxin domain occupies 3-106 (QEFVNCKIQP…TRLKQIGALQ (104 aa)). Lys9 carries the N6-succinyllysine modification. 2 disulfide bridges follow: Cys23–Cys26 and Cys79–Cys83.

This sequence belongs to the glutaredoxin family.

The protein resides in the cytoplasm. Its function is as follows. Has a glutathione-disulfide oxidoreductase activity in the presence of NADPH and glutathione reductase. Reduces low molecular weight disulfides and proteins. The polypeptide is Glutaredoxin-1 (GLRX) (Homo sapiens (Human)).